A 171-amino-acid chain; its full sequence is Sec-independent protein translocase protein TatB (171 aa).

The chain crosses the membrane as a helical span at residues 2–22 (FDGIGFMELLLIGVLGLVVLG). Residues 69–171 (SKGLSNLSPE…DTRSNPKANG (103 aa)) are disordered. Positions 88–97 (QAAQSVNRPY) are enriched in polar residues. 2 stretches are compositionally biased toward low complexity: residues 114–130 (HSPV…HTSP) and 138–158 (PTAT…SEPS). The segment covering 160-171 (GADTRSNPKANG) has biased composition (polar residues).

This sequence belongs to the TatB family. In terms of assembly, the Tat system comprises two distinct complexes: a TatABC complex, containing multiple copies of TatA, TatB and TatC subunits, and a separate TatA complex, containing only TatA subunits. Substrates initially bind to the TatABC complex, which probably triggers association of the separate TatA complex to form the active translocon.

It is found in the cell inner membrane. Its function is as follows. Part of the twin-arginine translocation (Tat) system that transports large folded proteins containing a characteristic twin-arginine motif in their signal peptide across membranes. Together with TatC, TatB is part of a receptor directly interacting with Tat signal peptides. TatB may form an oligomeric binding site that transiently accommodates folded Tat precursor proteins before their translocation. The sequence is that of Sec-independent protein translocase protein TatB from Shewanella baltica (strain OS185).